Here is a 165-residue protein sequence, read N- to C-terminus: Peptide methionine sulfoxide reductase MsrA (165 aa).

Cys11 is an active-site residue.

The protein belongs to the MsrA Met sulfoxide reductase family.

The catalysed reaction is L-methionyl-[protein] + [thioredoxin]-disulfide + H2O = L-methionyl-(S)-S-oxide-[protein] + [thioredoxin]-dithiol. It catalyses the reaction [thioredoxin]-disulfide + L-methionine + H2O = L-methionine (S)-S-oxide + [thioredoxin]-dithiol. Its function is as follows. Has an important function as a repair enzyme for proteins that have been inactivated by oxidation. Catalyzes the reversible oxidation-reduction of methionine sulfoxide in proteins to methionine. This Ureaplasma urealyticum serovar 10 (strain ATCC 33699 / Western) protein is Peptide methionine sulfoxide reductase MsrA.